Reading from the N-terminus, the 700-residue chain is Elongation factor G 1 (700 aa).

Positions 8–290 (ERYRNIGISA…AVIEYLPSPI (283 aa)) constitute a tr-type G domain. Residues 17-24 (AHIDAGKT), 88-92 (DTPGH), and 142-145 (NKMD) contribute to the GTP site.

Belongs to the TRAFAC class translation factor GTPase superfamily. Classic translation factor GTPase family. EF-G/EF-2 subfamily.

Its subcellular location is the cytoplasm. In terms of biological role, catalyzes the GTP-dependent ribosomal translocation step during translation elongation. During this step, the ribosome changes from the pre-translocational (PRE) to the post-translocational (POST) state as the newly formed A-site-bound peptidyl-tRNA and P-site-bound deacylated tRNA move to the P and E sites, respectively. Catalyzes the coordinated movement of the two tRNA molecules, the mRNA and conformational changes in the ribosome. The protein is Elongation factor G 1 of Bordetella avium (strain 197N).